A 134-amino-acid chain; its full sequence is Ribonuclease VapC40 (134 aa).

One can recognise a PINc domain in the interval 3–126 (APDTSVLVAG…LRAVETYERL (124 aa)). 2 residues coordinate Mg(2+): Asp-5 and Asp-98.

This sequence belongs to the PINc/VapC protein family. Mg(2+) serves as cofactor.

Toxic component of a type II toxin-antitoxin (TA) system. An RNase. Its cognate antitoxin is VapB40. The protein is Ribonuclease VapC40 of Mycobacterium tuberculosis (strain CDC 1551 / Oshkosh).